The following is a 121-amino-acid chain: Holin-like protein CidA (121 aa).

The next 3 membrane-spanning stretches (helical) occupy residues 27–47 (VHLP…SLKF), 58–78 (GADF…VAVI), and 89–109 (IDLI…TGIL).

It belongs to the CidA/LrgA family. CidA subfamily.

It is found in the cell membrane. Its function is as follows. Increases the activity of extracellular murein hydrolases possibly by mediating their export via hole formation. Inhibited by the antiholin-like proteins LrgAB. In an unstressed cell, the LrgAB products probably inhibit the function of the CidA protein. When a cell is stressed by the addition of antibiotics or by other factors in the environment, CidA possibly oligomerizes within the bacterial cell membrane, creating lesions that disrupt the proton motive force, which in turn results in loss of cell viability. These lesions are also hypothesized to regulate the subsequent cell lysis by either allowing the murein hydrolases access to the cell wall substrate and/or regulating their activity by a possible change in the cell wall pH that results from loss of membrane potential. The polypeptide is Holin-like protein CidA (Bacillus cytotoxicus (strain DSM 22905 / CIP 110041 / 391-98 / NVH 391-98)).